A 307-amino-acid polypeptide reads, in one-letter code: Cytochrome c1 2, heme protein, mitochondrial (307 aa).

A mitochondrion-targeting transit peptide spans 1-64 (MVGGGVIRQL…LLSFSTVASA (64 aa)). Topologically, residues 65–270 (DEAEHGLECP…EPEMEERKLM (206 aa)) are mitochondrial intermembrane. A Cytochrome c domain is found at 90–197 (ASIRRGHQVY…NGQNYVFALL (108 aa)). 4 residues coordinate heme c: cysteine 103, cysteine 106, histidine 107, and methionine 226. The helical transmembrane segment at 271–288 (GFKWIFLLSLALLQAAYY) threads the bilayer. Over 289–307 (RRLKWSVLKSRKLVLDVVN) the chain is Mitochondrial matrix.

The protein belongs to the cytochrome c family. Component of the ubiquinol-cytochrome c oxidoreductase (cytochrome b-c1 complex, complex III, CIII), a multisubunit enzyme composed of 10 subunits. The complex is composed of 3 respiratory subunits cytochrome b (MT-CYB), cytochrome c1 (CYC1-1 or CYC1-2) and Rieske protein (UCR1-1 or UCR1-2), 2 core protein subunits MPPalpha1 (or MPPalpha2) and MPPB, and 5 low-molecular weight protein subunits QCR7-1 (or QCR7-2), UCRQ-1 (or UCRQ-2), QCR9, UCRY and probably QCR6-1 (or QCR6-2). The complex exists as an obligatory dimer and forms supercomplexes (SCs) in the inner mitochondrial membrane with NADH-ubiquinone oxidoreductase (complex I, CI), resulting in different assemblies (supercomplexes SCI(1)III(2) and SCI(2)III(4)). In terms of processing, binds 1 heme c group covalently per subunit.

It is found in the mitochondrion inner membrane. Functionally, component of the ubiquinol-cytochrome c oxidoreductase, a multisubunit transmembrane complex that is part of the mitochondrial electron transport chain which drives oxidative phosphorylation. The respiratory chain contains 3 multisubunit complexes succinate dehydrogenase (complex II, CII), ubiquinol-cytochrome c oxidoreductase (cytochrome b-c1 complex, complex III, CIII) and cytochrome c oxidase (complex IV, CIV), that cooperate to transfer electrons derived from NADH and succinate to molecular oxygen, creating an electrochemical gradient over the inner membrane that drives transmembrane transport and the ATP synthase. The cytochrome b-c1 complex catalyzes electron transfer from ubiquinol to cytochrome c, linking this redox reaction to translocation of protons across the mitochondrial inner membrane, with protons being carried across the membrane as hydrogens on the quinol. In the process called Q cycle, 2 protons are consumed from the matrix, 4 protons are released into the intermembrane space and 2 electrons are passed to cytochrome c. Cytochrome c1 is a catalytic core subunit containing a c-type heme. It transfers electrons from the [2Fe-2S] iron-sulfur cluster of the Rieske protein to cytochrome c. This Arabidopsis thaliana (Mouse-ear cress) protein is Cytochrome c1 2, heme protein, mitochondrial (CYC1-2).